A 526-amino-acid polypeptide reads, in one-letter code: Rho guanine nucleotide exchange factor 3 (526 aa).

Positions 20 to 40 (ELPPASGPAKDAEEPSNKRVK) are disordered. Serine 47 and serine 70 each carry phosphoserine. The region spanning 122-304 (KRQEAIFELS…QGIVAEINTK (183 aa)) is the DH domain. In terms of domain architecture, PH spans 291–449 (INIIQGIVAE…WLNCIRQAKE (159 aa)). The disordered stretch occupies residues 464-526 (EGSFLNPTTG…GNSRHGESNV (63 aa)). A compositionally biased stretch (polar residues) spans 466 to 475 (SFLNPTTGSR).

As to quaternary structure, interacts with RHOA and RHOB.

Its subcellular location is the cytoplasm. Its function is as follows. Acts as a guanine nucleotide exchange factor (GEF) for RhoA and RhoB GTPases. The chain is Rho guanine nucleotide exchange factor 3 (ARHGEF3) from Pongo abelii (Sumatran orangutan).